The primary structure comprises 168 residues: Crossover junction endodeoxyribonuclease RuvC (168 aa).

Residues D7, E64, and D136 contribute to the active site. The Mg(2+) site is built by D7, E64, and D136.

This sequence belongs to the RuvC family. Homodimer which binds Holliday junction (HJ) DNA. The HJ becomes 2-fold symmetrical on binding to RuvC with unstacked arms; it has a different conformation from HJ DNA in complex with RuvA. In the full resolvosome a probable DNA-RuvA(4)-RuvB(12)-RuvC(2) complex forms which resolves the HJ. It depends on Mg(2+) as a cofactor.

It is found in the cytoplasm. It catalyses the reaction Endonucleolytic cleavage at a junction such as a reciprocal single-stranded crossover between two homologous DNA duplexes (Holliday junction).. Its function is as follows. The RuvA-RuvB-RuvC complex processes Holliday junction (HJ) DNA during genetic recombination and DNA repair. Endonuclease that resolves HJ intermediates. Cleaves cruciform DNA by making single-stranded nicks across the HJ at symmetrical positions within the homologous arms, yielding a 5'-phosphate and a 3'-hydroxyl group; requires a central core of homology in the junction. The consensus cleavage sequence is 5'-(A/T)TT(C/G)-3'. Cleavage occurs on the 3'-side of the TT dinucleotide at the point of strand exchange. HJ branch migration catalyzed by RuvA-RuvB allows RuvC to scan DNA until it finds its consensus sequence, where it cleaves and resolves the cruciform DNA. The sequence is that of Crossover junction endodeoxyribonuclease RuvC from Polynucleobacter necessarius subsp. necessarius (strain STIR1).